The primary structure comprises 156 residues: Ribosomal RNA large subunit methyltransferase H (156 aa).

Residues Leu-73, Gly-104, and 123-128 (LSSLTL) each bind S-adenosyl-L-methionine.

This sequence belongs to the RNA methyltransferase RlmH family. Homodimer.

It localises to the cytoplasm. It carries out the reaction pseudouridine(1915) in 23S rRNA + S-adenosyl-L-methionine = N(3)-methylpseudouridine(1915) in 23S rRNA + S-adenosyl-L-homocysteine + H(+). Specifically methylates the pseudouridine at position 1915 (m3Psi1915) in 23S rRNA. In Ralstonia pickettii (strain 12J), this protein is Ribosomal RNA large subunit methyltransferase H.